The chain runs to 463 residues: DNA polymerase subunit gamma-2, mitochondrial (463 aa).

A mitochondrion-targeting transit peptide spans Met-1–Leu-44.

Heterotrimer composed of a catalytic subunit and a homodimer of accessory subunits.

The protein resides in the mitochondrion. Its function is as follows. Mitochondrial polymerase processivity subunit. It regulates the polymerase and exonuclease activities promoting processive DNA synthesis. Binds to ss-DNA. This is DNA polymerase subunit gamma-2, mitochondrial (polg2) from Xenopus laevis (African clawed frog).